The following is a 141-amino-acid chain: uncharacterized protein (141 aa).

In terms of domain architecture, HIT spans 10-117 (IFCDIVQGSI…VPKYETGKGF (108 aa)). The short motif at 102–106 (HFHLH) is the Histidine triad motif element.

This is an uncharacterized protein from Mycoplasma genitalium (strain ATCC 33530 / DSM 19775 / NCTC 10195 / G37) (Mycoplasmoides genitalium).